The following is a 953-amino-acid chain: Pyruvate, phosphate dikinase, chloroplastic (953 aa).

The N-terminal 77 residues, 1-77, are a transit peptide targeting the chloroplast; sequence MMSSLSVEGM…VLNPVSPPVT (77 aa). The tract at residues 55-74 is disordered; that stretch reads PELRSSGLTPPRAVLNPVSP. A Phosphothreonine; by PDRP1 modification is found at Thr-533. Catalysis depends on His-535, which acts as the Tele-phosphohistidine intermediate. The substrate site is built by Arg-641, Arg-698, Glu-827, Gly-848, Thr-849, Asn-850, and Asp-851. Glu-827 serves as a coordination point for Mg(2+). Position 851 (Asp-851) interacts with Mg(2+). The active-site Proton donor is the Cys-913.

It belongs to the PEP-utilizing enzyme family. Homotetramer. Requires Mg(2+) as cofactor. In terms of processing, phosphorylation of Thr-533 in the dark inactivates the enzyme. Dephosphorylation upon light stimulation reactivates the enzyme. As to expression, isoform 1 mainly localized in mesophyll cells and only a low level is found in bundle sheath cells. Isoform 2 is expressed in roots and stems.

It localises to the plastid. The protein localises to the chloroplast. It is found in the cytoplasm. It catalyses the reaction pyruvate + phosphate + ATP = phosphoenolpyruvate + AMP + diphosphate + H(+). It functions in the pathway photosynthesis; C4 acid pathway. Activated by light-induced dephosphorylation. Inhibited by dark-induced phosphorylation. Both reactions are catalyzed by PDRP1. Its function is as follows. Formation of phosphoenolpyruvate, which is the primary acceptor of CO(2) in C4 and some Crassulacean acid metabolism plants. The protein is Pyruvate, phosphate dikinase, chloroplastic (PPDK) of Flaveria trinervia (Clustered yellowtops).